Here is a 90-residue protein sequence, read N- to C-terminus: DNA-binding protein HU-alpha (90 aa).

This sequence belongs to the bacterial histone-like protein family. As to quaternary structure, heterodimer of an alpha and a beta chain.

Histone-like DNA-binding protein which is capable of wrapping DNA to stabilize it, and thus to prevent its denaturation under extreme environmental conditions. This Aeromonas hydrophila protein is DNA-binding protein HU-alpha (hupA).